A 1548-amino-acid chain; its full sequence is Multidrug resistance protein (1548 aa).

Residues 1–238 lie on the Cytoplasmic side of the membrane; sequence MVDNGHVTIA…YHVWAQILPK (238 aa). An ABC transmembrane type-1 1 domain is found at 231 to 514; it reads VWAQILPKLL…IPIIISSILQ (284 aa). A helical transmembrane segment spans residues 239 to 256; it reads LLSDVTALMLPVLLEYFV. Asn-263 carries an N-linked (GlcNAc...) asparagine glycan. The next 5 membrane-spanning stretches (helical) occupy residues 266 to 287, 349 to 367, 375 to 392, 463 to 480, and 500 to 519; these read WGWG…SCSA, VMYF…LLLI, VPGM…AVIS, ATPT…HVSG, and VSFF…FVSA. Residues 520–932 are Cytoplasmic-facing; sequence KRVTAFIECP…PWSTYVAYLK (413 aa). The 222-residue stretch at 634 to 855 folds into the ABC transporter 1 domain; the sequence is VEEGDREYYQ…ALEETLRGEL (222 aa). Position 667–674 (667–674) interacts with ATP; it reads GSTGSGKS. The next 4 helical transmembrane spans lie at 933–950, 975–993, 1051–1070, and 1072–1088; these read SCGG…FALT, TYLY…GSPL, GYLY…IIMV, and VQPF…YSYY. In terms of domain architecture, ABC transmembrane type-1 2 spans 940-1221; sequence WGCLLATFAL…LVRQVAMVEA (282 aa). N-linked (GlcNAc...) asparagine glycosylation is found at Asn-1095 and Asn-1154. The next 2 membrane-spanning stretches (helical) occupy residues 1164–1182 and 1186–1205; these read LEFL…GVIG and GASS…SMTL. The Cytoplasmic segment spans residues 1206 to 1548; sequence TETLNWLVRQ…RIVQPAVLSD (343 aa). One can recognise an ABC transporter 2 domain in the interval 1286-1521; the sequence is LVLEGVQMRY…HQSMFHSMVE (236 aa). Residue 1320–1327 participates in ATP binding; that stretch reads GRTGSGKS.

The protein belongs to the ABC transporter superfamily. ABCB family. Multidrug resistance exporter (TC 3.A.1.201) subfamily.

It localises to the membrane. It carries out the reaction ATP + H2O + xenobioticSide 1 = ADP + phosphate + xenobioticSide 2.. The polypeptide is Multidrug resistance protein (PGPA) (Leishmania tarentolae (Sauroleishmania tarentolae)).